A 122-amino-acid chain; its full sequence is MIQQESRLKIADNTGAKEILTIRVLGGSGRRYAGLGDVIVATVKDAIPGGNVKKGEVVKAVIVRTKKETRRPDGSYIKFDENAAVILNSNGEPRGTRIFGPVGRELRDKKFMKIISLAPEVI.

This sequence belongs to the universal ribosomal protein uL14 family. Part of the 50S ribosomal subunit. Forms a cluster with proteins L3 and L19. In the 70S ribosome, L14 and L19 interact and together make contacts with the 16S rRNA in bridges B5 and B8.

Functionally, binds to 23S rRNA. Forms part of two intersubunit bridges in the 70S ribosome. The sequence is that of Large ribosomal subunit protein uL14 from Clavibacter michiganensis subsp. michiganensis (strain NCPPB 382).